Consider the following 436-residue polypeptide: Probable G-protein coupled receptor C06G4.5 (436 aa).

At 1–53 (MSTNLVDYVDDSYLNQSMNSENGLDSVTQIMYDMKKYNIVNDVLPPPNHEDLH) the chain is on the extracellular side. Asn15 carries N-linked (GlcNAc...) asparagine glycosylation. Residues 54–74 (VVIMAVSYLLLFLLGTCGNVA) form a helical membrane-spanning segment. At 75–94 (VLTTIYHVIRSSRATLDNTL) the chain is on the cytoplasmic side. The chain crosses the membrane as a helical span at residues 95 to 115 (IYVIVLSCVDFGVCLSLPITV). The Extracellular portion of the chain corresponds to 116–132 (IDQILGFWMFGKIPCKL). A helical transmembrane segment spans residues 133 to 153 (HAVFENFGKILSALILTAMSF). Residues 154–171 (DRYAGVCHPQRKRLRSRN) are Cytoplasmic-facing. Residues 172–192 (FAITILLVLAVYAFITLCPLL) traverse the membrane as a helical segment. Over 193–230 (WSFTAREIILYAKETAPGMLTRMKIEKCTVDIDSQMFT) the chain is Extracellular. Residues 231-251 (AFTIYQFILCYCTPLVLIAFF) traverse the membrane as a helical segment. Residues 252 to 281 (YTKLLSKLREHTRTFKSSQIPFLHISLYTL) are Cytoplasmic-facing. The helical transmembrane segment at 282–302 (AVACFYFLCWTPFWMATLFAV) threads the bilayer. Residues 303–316 (YLENSANSSSVPPV) are Extracellular-facing. N-linked (GlcNAc...) asparagine glycosylation is present at Asn309. A helical membrane pass occupies residues 317–337 (FVYIMYFIHALPFTNSAINWI). The Cytoplasmic portion of the chain corresponds to 338 to 436 (LYGALNGQLQ…LLSNHNPTFL (99 aa)).

It belongs to the G-protein coupled receptor 1 family.

It localises to the cell membrane. In terms of biological role, putative receptor. This Caenorhabditis elegans protein is Probable G-protein coupled receptor C06G4.5.